The primary structure comprises 469 residues: 3-isopropylmalate dehydratase large subunit (469 aa).

The [4Fe-4S] cluster site is built by C349, C410, and C413.

It belongs to the aconitase/IPM isomerase family. LeuC type 1 subfamily. As to quaternary structure, heterodimer of LeuC and LeuD. It depends on [4Fe-4S] cluster as a cofactor.

It carries out the reaction (2R,3S)-3-isopropylmalate = (2S)-2-isopropylmalate. It functions in the pathway amino-acid biosynthesis; L-leucine biosynthesis; L-leucine from 3-methyl-2-oxobutanoate: step 2/4. Catalyzes the isomerization between 2-isopropylmalate and 3-isopropylmalate, via the formation of 2-isopropylmaleate. This Neisseria gonorrhoeae (strain ATCC 700825 / FA 1090) protein is 3-isopropylmalate dehydratase large subunit.